The sequence spans 648 residues: Sodium/nucleoside cotransporter 1 (648 aa).

Residues methionine 1 to glutamine 80 are Cytoplasmic-facing. A helical membrane pass occupies residues leucine 81 to leucine 104. Residues aspartate 105–alanine 109 are Extracellular-facing. The chain crosses the membrane as a helical span at residues leucine 110–leucine 128. Residues lysine 129 to cysteine 147 lie on the Cytoplasmic side of the membrane. The chain crosses the membrane as a helical span at residues leucine 148–tryptophan 167. Residues leucine 168 to glutamine 178 are Extracellular-facing. The chain crosses the membrane as a helical span at residues leucine 179–glycine 195. At serine 196–alanine 201 the chain is on the cytoplasmic side. Residues valine 202–isoleucine 222 traverse the membrane as a helical segment. At arginine 223–valine 261 the chain is on the extracellular side. Residues phenylalanine 262–leucine 283 traverse the membrane as a helical segment. At glycine 284–alanine 294 the chain is on the cytoplasmic side. Residues tryptophan 295–serine 318 traverse the membrane as a helical segment. The Extracellular portion of the chain corresponds to glutamine 319–glutamate 337. Residues valine 338–phenylalanine 360 traverse the membrane as a helical segment. The Cytoplasmic segment spans residues glycine 361–serine 366. Residues leucine 367 to tyrosine 386 traverse the membrane as a helical segment. The Extracellular portion of the chain corresponds to proline 387 to lysine 423. Residues valine 424 to leucine 446 traverse the membrane as a helical segment. The Cytoplasmic portion of the chain corresponds to serine 447–glycine 457. A helical membrane pass occupies residues leucine 458 to tryptophan 479. The Extracellular portion of the chain corresponds to glutamate 480 to threonine 534. A helical transmembrane segment spans residues threonine 535–valine 558. Topologically, residues proline 559–valine 569 are cytoplasmic. Residues leucine 570 to valine 592 form a helical membrane-spanning segment. At proline 593–threonine 648 the chain is on the extracellular side. N-linked (GlcNAc...) asparagine glycosylation is found at asparagine 605 and asparagine 643.

It belongs to the concentrative nucleoside transporter (CNT) (TC 2.A.41) family. In terms of processing, N-glycosylated. N-glycosylation is required for localization to the plasma membrane and the transporter activity. In terms of tissue distribution, expressed predominantly in the brush-border membranes of the polarized epithelial cells of jejunum and renal cortical tubules and in the bile canalicular membranes of liver parenchymal cells.

The protein resides in the cell membrane. It localises to the apical cell membrane. The enzyme catalyses uridine(out) + Na(+)(out) = uridine(in) + Na(+)(in). The catalysed reaction is thymidine(out) + Na(+)(out) = thymidine(in) + Na(+)(in). It catalyses the reaction cytidine(out) + Na(+)(out) = cytidine(in) + Na(+)(in). It carries out the reaction adenosine(out) + Na(+)(out) = adenosine(in) + Na(+)(in). With respect to regulation, due to its high apparent affinity but slow transport, adenosine could act as a negative regulator of pyrimidine transport under some conditions. Its function is as follows. Sodium and pyrimidine nucleoside symporter of the plasma membrane that imports uridine, thymidine and cytidine into cells by coupling their transport to the transmembrane sodium electrochemical gradient. Also transports adenosine, an atypical substrate transported with high apparent affinity, but low maximum velocity. Therefore, exhibits the transport characteristics of the nucleoside transport system cit or N2 subtype (N2/cit). Involved in renal nucleoside (re)absorption. This Rattus norvegicus (Rat) protein is Sodium/nucleoside cotransporter 1.